A 90-amino-acid polypeptide reads, in one-letter code: N(2)-fixation sustaining protein CowN (90 aa).

Belongs to the CowN family.

Its function is as follows. Is required to sustain N(2)-dependent growth in the presence of low levels of carbon monoxide (CO). Probably acts by protecting the N(2) fixation ability of the nitrogenase complex, which is inactivated in the presence of CO. The protein is N(2)-fixation sustaining protein CowN of Halorhodospira halophila (strain DSM 244 / SL1) (Ectothiorhodospira halophila (strain DSM 244 / SL1)).